A 656-amino-acid chain; its full sequence is Methionine--tRNA ligase (656 aa).

The 'HIGH' region signature appears at 11–21; sequence YYVNDIPHIGH. Residues cysteine 126, cysteine 129, cysteine 147, and cysteine 150 each contribute to the Zn(2+) site. Residues 301–305 carry the 'KMSKS' region motif; the sequence is KMSKS. An ATP-binding site is contributed by lysine 304. Residues 555–656 enclose the tRNA-binding domain; the sequence is DFKKVEIKVG…REKIAGSLIS (102 aa).

The protein belongs to the class-I aminoacyl-tRNA synthetase family. MetG type 2A subfamily. Homodimer. Requires Zn(2+) as cofactor.

Its subcellular location is the cytoplasm. The catalysed reaction is tRNA(Met) + L-methionine + ATP = L-methionyl-tRNA(Met) + AMP + diphosphate. Its function is as follows. Is required not only for elongation of protein synthesis but also for the initiation of all mRNA translation through initiator tRNA(fMet) aminoacylation. The polypeptide is Methionine--tRNA ligase (metG) (Helicobacter pylori (strain J99 / ATCC 700824) (Campylobacter pylori J99)).